A 139-amino-acid chain; its full sequence is Natriuretic peptides A (139 aa).

Residues 1–21 (MTALVLWGLLLLLGQHTQVNS) form the signal peptide. Residues 22–114 (HVLGRPFSAS…QDLLMSLRKR (93 aa)) constitute a propeptide that is removed on maturation. A disulfide bridge links C118 with C134.

The protein belongs to the natriuretic peptide family.

It is found in the secreted. Functionally, hormone playing a key role in cardiovascular homeostasis through regulation of natriuresis, diuresis, and vasodilation. Has a cGMP-stimulating activity. The sequence is that of Natriuretic peptides A (nppa) from Takifugu rubripes (Japanese pufferfish).